The chain runs to 286 residues: 4-diphosphocytidyl-2-C-methyl-D-erythritol kinase (286 aa).

Lysine 11 is a catalytic residue. Position 93–103 (93–103 (PFGAGLGGGSS)) interacts with ATP. Aspartate 135 is an active-site residue.

This sequence belongs to the GHMP kinase family. IspE subfamily.

The catalysed reaction is 4-CDP-2-C-methyl-D-erythritol + ATP = 4-CDP-2-C-methyl-D-erythritol 2-phosphate + ADP + H(+). It functions in the pathway isoprenoid biosynthesis; isopentenyl diphosphate biosynthesis via DXP pathway; isopentenyl diphosphate from 1-deoxy-D-xylulose 5-phosphate: step 3/6. Its function is as follows. Catalyzes the phosphorylation of the position 2 hydroxy group of 4-diphosphocytidyl-2C-methyl-D-erythritol. This chain is 4-diphosphocytidyl-2-C-methyl-D-erythritol kinase, found in Prosthecochloris aestuarii (strain DSM 271 / SK 413).